The primary structure comprises 226 residues: Glutathione peroxidase 3 (226 aa).

The first 24 residues, 1 to 24 (MARLLQASCLLSLLLAGFVPQSRG), serve as a signal peptide directing secretion. Sec-73 is a catalytic residue. A non-standard amino acid (selenocysteine) is located at residue Sec-73.

This sequence belongs to the glutathione peroxidase family. Homotetramer. In terms of tissue distribution, secreted in plasma.

Its subcellular location is the secreted. The catalysed reaction is 2 glutathione + H2O2 = glutathione disulfide + 2 H2O. It catalyses the reaction tert-butyl hydroperoxide + 2 glutathione = tert-butanol + glutathione disulfide + H2O. Functionally, protects cells and enzymes from oxidative damage, by catalyzing the reduction of hydrogen peroxide, lipid peroxides and organic hydroperoxide, by glutathione. This chain is Glutathione peroxidase 3, found in Pongo pygmaeus (Bornean orangutan).